We begin with the raw amino-acid sequence, 125 residues long: Large ribosomal subunit protein bL12 (125 aa).

It belongs to the bacterial ribosomal protein bL12 family. As to quaternary structure, homodimer. Part of the ribosomal stalk of the 50S ribosomal subunit. Forms a multimeric L10(L12)X complex, where L10 forms an elongated spine to which 2 to 4 L12 dimers bind in a sequential fashion. Binds GTP-bound translation factors.

In terms of biological role, forms part of the ribosomal stalk which helps the ribosome interact with GTP-bound translation factors. Is thus essential for accurate translation. The sequence is that of Large ribosomal subunit protein bL12 from Afipia carboxidovorans (strain ATCC 49405 / DSM 1227 / KCTC 32145 / OM5) (Oligotropha carboxidovorans).